A 393-amino-acid polypeptide reads, in one-letter code: NAD(P)H-quinone oxidoreductase subunit H, chloroplastic (393 aa).

It belongs to the complex I 49 kDa subunit family. As to quaternary structure, NDH is composed of at least 16 different subunits, 5 of which are encoded in the nucleus.

The protein resides in the plastid. The protein localises to the chloroplast thylakoid membrane. The catalysed reaction is a plastoquinone + NADH + (n+1) H(+)(in) = a plastoquinol + NAD(+) + n H(+)(out). It catalyses the reaction a plastoquinone + NADPH + (n+1) H(+)(in) = a plastoquinol + NADP(+) + n H(+)(out). In terms of biological role, NDH shuttles electrons from NAD(P)H:plastoquinone, via FMN and iron-sulfur (Fe-S) centers, to quinones in the photosynthetic chain and possibly in a chloroplast respiratory chain. The immediate electron acceptor for the enzyme in this species is believed to be plastoquinone. Couples the redox reaction to proton translocation, and thus conserves the redox energy in a proton gradient. The polypeptide is NAD(P)H-quinone oxidoreductase subunit H, chloroplastic (Draba nemorosa (Woodland whitlowgrass)).